We begin with the raw amino-acid sequence, 272 residues long: Phosphoglycolate phosphatase (272 aa).

Asp19 serves as the catalytic Nucleophile. Asp19, Asp21, and Asp182 together coordinate Mg(2+).

Belongs to the HAD-like hydrolase superfamily. CbbY/CbbZ/Gph/YieH family. Mg(2+) is required as a cofactor.

The enzyme catalyses 2-phosphoglycolate + H2O = glycolate + phosphate. The protein operates within organic acid metabolism; glycolate biosynthesis; glycolate from 2-phosphoglycolate: step 1/1. Specifically catalyzes the dephosphorylation of 2-phosphoglycolate. Is involved in the dissimilation of the intracellular 2-phosphoglycolate formed during the DNA repair of 3'-phosphoglycolate ends, a major class of DNA lesions induced by oxidative stress. This chain is Phosphoglycolate phosphatase, found in Pseudomonas savastanoi pv. phaseolicola (strain 1448A / Race 6) (Pseudomonas syringae pv. phaseolicola (strain 1448A / Race 6)).